Here is a 194-residue protein sequence, read N- to C-terminus: Mitochondrial import inner membrane translocase subunit Tim22 (194 aa).

2 disulfide bridges follow: Cys69-Cys141 and Cys160-Cys179. The next 3 membrane-spanning stretches (helical) occupy residues 74 to 94 (ALAC…TAGI), 123 to 143 (MSYA…ECLV), and 170 to 190 (AGLK…AAID).

It belongs to the Tim17/Tim22/Tim23 family. In terms of assembly, component of the TIM22 complex, whose core is composed of TIMM22, associated with peripheral protein FXC1/TIMM10B and the 70 kDa heterohexamer. In most cases, the 70 kDa complex is composed of TIMM9 and TIMM10 (TIMM10A or TIMM10B). A small fraction of the 70 kDa complex is composed of TIMM8 (TIMM8A/DDP1 or TIMM8B/DDP2) and TIMM13. The TIM22 complex also contains AGK and TIMM29. Interacts directly with TIMM9, TIMM10A and FXC1/TIMM10B. Interacts (when oxidized) with TIMM29; interaction is direct. Post-translationally, disulfide bonds promote efficient assembly of the TIM22 complex.

Its subcellular location is the mitochondrion inner membrane. Essential core component of the TIM22 complex, a complex that mediates the import and insertion of multi-pass transmembrane proteins into the mitochondrial inner membrane. In the TIM22 complex, it constitutes the voltage-activated and signal-gated channel. Forms a twin-pore translocase that uses the membrane potential as external driving force in 2 voltage-dependent steps. The sequence is that of Mitochondrial import inner membrane translocase subunit Tim22 (TIMM22) from Bos taurus (Bovine).